A 67-amino-acid polypeptide reads, in one-letter code: SPbeta prophage-derived uncharacterized protein YoqK (67 aa).

This Bacillus subtilis (strain 168) protein is SPbeta prophage-derived uncharacterized protein YoqK (yoqK).